Here is a 458-residue protein sequence, read N- to C-terminus: Argininosuccinate lyase (458 aa).

This sequence belongs to the lyase 1 family. Argininosuccinate lyase subfamily.

The protein localises to the cytoplasm. It carries out the reaction 2-(N(omega)-L-arginino)succinate = fumarate + L-arginine. The protein operates within amino-acid biosynthesis; L-arginine biosynthesis; L-arginine from L-ornithine and carbamoyl phosphate: step 3/3. This Geobacter sulfurreducens (strain ATCC 51573 / DSM 12127 / PCA) protein is Argininosuccinate lyase.